Reading from the N-terminus, the 208-residue chain is UPF0637 protein BCQ_3749 (208 aa).

It belongs to the UPF0637 family.

This Bacillus cereus (strain Q1) protein is UPF0637 protein BCQ_3749.